The sequence spans 320 residues: o-succinylbenzoate synthase (320 aa).

Lys133 (proton donor) is an active-site residue. Asp161, Glu190, and Asp213 together coordinate Mg(2+). Lys235 (proton acceptor) is an active-site residue.

This sequence belongs to the mandelate racemase/muconate lactonizing enzyme family. MenC type 1 subfamily. It depends on a divalent metal cation as a cofactor.

The catalysed reaction is (1R,6R)-6-hydroxy-2-succinyl-cyclohexa-2,4-diene-1-carboxylate = 2-succinylbenzoate + H2O. The protein operates within quinol/quinone metabolism; 1,4-dihydroxy-2-naphthoate biosynthesis; 1,4-dihydroxy-2-naphthoate from chorismate: step 4/7. It participates in quinol/quinone metabolism; menaquinone biosynthesis. Functionally, converts 2-succinyl-6-hydroxy-2,4-cyclohexadiene-1-carboxylate (SHCHC) to 2-succinylbenzoate (OSB). The chain is o-succinylbenzoate synthase from Escherichia coli (strain SMS-3-5 / SECEC).